The primary structure comprises 112 residues: Large ribosomal subunit protein eL31 (112 aa).

It belongs to the eukaryotic ribosomal protein eL31 family. Component of the large ribosomal subunit. Mature ribosomes consist of a small (40S) and a large (60S) subunit. The 40S subunit contains about 32 different proteins and 1 molecule of RNA (18S). The 60S subunit contains 45 different proteins and 3 molecules of RNA (25S, 5.8S and 5S).

It is found in the cytoplasm. Component of the ribosome, a large ribonucleoprotein complex responsible for the synthesis of proteins in the cell. The small ribosomal subunit (SSU) binds messenger RNAs (mRNAs) and translates the encoded message by selecting cognate aminoacyl-transfer RNA (tRNA) molecules. The large subunit (LSU) contains the ribosomal catalytic site termed the peptidyl transferase center (PTC), which catalyzes the formation of peptide bonds, thereby polymerizing the amino acids delivered by tRNAs into a polypeptide chain. The nascent polypeptides leave the ribosome through a tunnel in the LSU and interact with protein factors that function in enzymatic processing, targeting, and the membrane insertion of nascent chains at the exit of the ribosomal tunnel. The polypeptide is Large ribosomal subunit protein eL31 (Candida albicans (strain SC5314 / ATCC MYA-2876) (Yeast)).